Consider the following 570-residue polypeptide: Proline--tRNA ligase (570 aa).

It belongs to the class-II aminoacyl-tRNA synthetase family. ProS type 1 subfamily. In terms of assembly, homodimer.

The protein resides in the cytoplasm. The catalysed reaction is tRNA(Pro) + L-proline + ATP = L-prolyl-tRNA(Pro) + AMP + diphosphate. Functionally, catalyzes the attachment of proline to tRNA(Pro) in a two-step reaction: proline is first activated by ATP to form Pro-AMP and then transferred to the acceptor end of tRNA(Pro). As ProRS can inadvertently accommodate and process non-cognate amino acids such as alanine and cysteine, to avoid such errors it has two additional distinct editing activities against alanine. One activity is designated as 'pretransfer' editing and involves the tRNA(Pro)-independent hydrolysis of activated Ala-AMP. The other activity is designated 'posttransfer' editing and involves deacylation of mischarged Ala-tRNA(Pro). The misacylated Cys-tRNA(Pro) is not edited by ProRS. The protein is Proline--tRNA ligase of Shewanella sp. (strain MR-4).